The chain runs to 429 residues: Glutamate-1-semialdehyde 2,1-aminomutase 2 (429 aa).

Residue lysine 268 is modified to N6-(pyridoxal phosphate)lysine.

Belongs to the class-III pyridoxal-phosphate-dependent aminotransferase family. HemL subfamily. Homodimer. The cofactor is pyridoxal 5'-phosphate.

It localises to the cytoplasm. The enzyme catalyses (S)-4-amino-5-oxopentanoate = 5-aminolevulinate. The protein operates within porphyrin-containing compound metabolism; protoporphyrin-IX biosynthesis; 5-aminolevulinate from L-glutamyl-tRNA(Glu): step 2/2. The sequence is that of Glutamate-1-semialdehyde 2,1-aminomutase 2 from Staphylococcus aureus (strain MSSA476).